Consider the following 113-residue polypeptide: MMTRWALVVFVVLMLDRILFVPGTPIPTFQLLPQNSLETTPSSVTSESSSGTTTGPSASWSNSKASPYLDTRVILSLDVPIGLLRILLEQARYKAARNQAATNAQILAHVGRR.

Residues 1–23 (MMTRWALVVFVVLMLDRILFVPG) form the signal peptide. Positions 24-71 (TPIPTFQLLPQNSLETTPSSVTSESSSGTTTGPSASWSNSKASPYLDT) are excised as a propeptide. A compositionally biased stretch (low complexity) spans 37 to 61 (LETTPSSVTSESSSGTTTGPSASWS). Residues 37-64 (LETTPSSVTSESSSGTTTGPSASWSNSK) are disordered. A Valine amide; partial modification is found at Val110.

The protein belongs to the sauvagine/corticotropin-releasing factor/urotensin I family. Binds with high affinity to CRF receptors 2-alpha and 2-beta. In terms of processing, glycosylated.

The protein resides in the secreted. Its function is as follows. Suppresses food intake, delays gastric emptying and decreases heat-induced edema. Might represent an endogenous ligand for maintaining homeostasis after stress. In Mus musculus (Mouse), this protein is Urocortin-2 (Ucn2).